The following is a 142-amino-acid chain: uncharacterized protein (142 aa).

A disordered region spans residues 1–31 (MSLPKKKKPEVEEEEKPEEEEEKEEEQEIDI). The segment covering 11–29 (VEEEEKPEEEEEKEEEQEI) has biased composition (acidic residues).

This is an uncharacterized protein from Acidianus sp. F28 (AFV-2).